The chain runs to 44 residues: Iota-conotoxin-like R11.11 (44 aa).

4 disulfides stabilise this stretch: C5–C19, C12–C22, C18–C27, and C21–C36. R44 is a propeptide (removed by a carboxypeptidase).

It belongs to the conotoxin I1 superfamily. In terms of tissue distribution, expressed by the venom duct.

It is found in the secreted. In terms of biological role, iota-conotoxins bind to voltage-gated sodium channels (Nav) and act as agonists by shifting the voltage-dependence of activation to more hyperpolarized levels. Produces general excitatory symptoms. The protein is Iota-conotoxin-like R11.11 of Conus radiatus (Rayed cone).